The following is a 552-amino-acid chain: Urocanate hydratase (552 aa).

NAD(+)-binding positions include 49–50, Gln-127, 173–175, Asp-193, 239–240, 260–264, 270–271, and Tyr-319; these read GG, GMG, NA, QTSAH, and YV. The active site involves Cys-407. Gly-489 provides a ligand contact to NAD(+).

This sequence belongs to the urocanase family. NAD(+) is required as a cofactor.

The protein localises to the cytoplasm. The catalysed reaction is 4-imidazolone-5-propanoate = trans-urocanate + H2O. Its pathway is amino-acid degradation; L-histidine degradation into L-glutamate; N-formimidoyl-L-glutamate from L-histidine: step 2/3. Functionally, catalyzes the conversion of urocanate to 4-imidazolone-5-propionate. This Bacillus cytotoxicus (strain DSM 22905 / CIP 110041 / 391-98 / NVH 391-98) protein is Urocanate hydratase.